Here is a 318-residue protein sequence, read N- to C-terminus: Cyclic AMP receptor-like protein F (318 aa).

The Extracellular portion of the chain corresponds to 1–3; the sequence is MKD. The helical transmembrane segment at 4 to 24 threads the bilayer; sequence IILIYMICAPISMIGSLFIII. The Cytoplasmic portion of the chain corresponds to 25–38; it reads TWLLYAKLKNSGSN. A helical transmembrane segment spans residues 39 to 59; the sequence is FIFFQAISDFFFTSKYIITII. The Extracellular portion of the chain corresponds to 60–83; the sequence is FYYINIPQFSDETSSTDTNPYCFS. Cys81 and Cys177 are disulfide-bonded. Residues 84–104 form a helical membrane-spanning segment; that stretch reads LGLFSQFFGQATIMWSYTMTV. At 105-145 the chain is on the cytoplasmic side; it reads KVFHSYFEMKKKNNNNNIGSNNIGGGGGGNNSNKQNSIDKT. Residues 146 to 166 traverse the membrane as a helical segment; that stretch reads LKWYHLFVWGFCLVNATIIGI. Residues 167–187 lie on the Extracellular side of the membrane; that stretch reads SKQYGPSSTGCWIVGANNPYR. Residues 188–208 traverse the membrane as a helical segment; the sequence is FFELVPLYFTITTSIIILILI. The Cytoplasmic portion of the chain corresponds to 209–234; the sequence is LVKMKKSKPSSLLPTESMRYNQQARE. Residues 235 to 255 form a helical membrane-spanning segment; the sequence is FKIQLMKFVLIFIIFWLPATV. Residues 256-267 are Extracellular-facing; the sequence is LRTLEYFGIEKT. Residues 268–288 traverse the membrane as a helical segment; sequence FFILLDAVSVSLQALANSLVW. Residues 289 to 318 lie on the Cytoplasmic side of the membrane; the sequence is ATSPQFLKLMKRKVVNKPNKQMEREYLINK.

It belongs to the G-protein coupled receptor 5 family.

The protein resides in the membrane. Receptor for cAMP. The polypeptide is Cyclic AMP receptor-like protein F (crlF) (Dictyostelium discoideum (Social amoeba)).